The sequence spans 109 residues: Cell division protein ZapA (109 aa).

A coiled-coil region spans residues 21–97; the sequence is PEQRDALSQA…QTIEQALLDQ (77 aa).

The protein belongs to the ZapA family. Type 1 subfamily. As to quaternary structure, homodimer. Interacts with FtsZ.

It is found in the cytoplasm. Functionally, activator of cell division through the inhibition of FtsZ GTPase activity, therefore promoting FtsZ assembly into bundles of protofilaments necessary for the formation of the division Z ring. It is recruited early at mid-cell but it is not essential for cell division. The chain is Cell division protein ZapA from Enterobacter sp. (strain 638).